The chain runs to 923 residues: Smoothelin (923 aa).

The residue at position 2 (Ala2) is an N-acetylalanine. Residues 24-89 adopt a coiled-coil conformation; it reads LAERRRIRSA…ARLAGRLESM (66 aa). Positions 134 to 456 are disordered; that stretch reads SRLPSSGPRE…GTGEPGGSMK (323 aa). Low complexity-rich tracts occupy residues 164–179 and 192–205; these read QEQQ…TPED and RAPP…PASP. The segment covering 237–252 has biased composition (pro residues); that stretch reads LPHPSEAPSPEPPMSP. 2 stretches are compositionally biased toward polar residues: residues 272–285 and 293–314; these read PSDT…FSNT and TKSC…NREP. 4 positions are modified to phosphoserine: Ser299, Ser301, Ser304, and Ser340. Phosphothreonine occurs at positions 359 and 372. Residues 366–389 show a composition bias toward low complexity; sequence PSLISTTPASSSSSNSSSPSPSDT. Phosphoserine is present on residues Ser501, Ser521, and Ser574. 2 disordered regions span residues 542–578 and 615–772; these read KMEP…PLSA and QRKR…ARKA. The stretch at 601–628 forms a coiled coil; it reads EERKLIRAALRELRQRKRDQRDKERERR. The segment covering 615–638 has biased composition (basic and acidic residues); sequence QRKRDQRDKERERRLREARARPGE. Ser641 carries the post-translational modification Phosphoserine. A compositionally biased stretch (polar residues) spans 674–687; it reads NDGTQTARTTTVES. A compositionally biased stretch (low complexity) spans 697-721; the sequence is SSSSSTTTTTVQTKSFSSSSSSSSS. Ser735 carries the post-translational modification Phosphoserine. The segment covering 744-756 has biased composition (basic and acidic residues); that stretch reads LERRQAEKKKELM. Position 798 is a phosphoserine (Ser798). The 108-residue stretch at 805-912 folds into the Calponin-homology (CH) domain; sequence NSIKQMLLDW…YVQSLYNHLR (108 aa).

This sequence belongs to the smoothelin family.

The protein resides in the cytoplasm. It is found in the cytoskeleton. Its function is as follows. Structural protein of the cytoskeleton. The sequence is that of Smoothelin (Smtn) from Mus musculus (Mouse).